The following is a 170-amino-acid chain: MAAAAQAPAAAKVVVATSPRAGGGGGGGGDRKVVPVVVAAAAGDEAQSEMHVLAVDDSSVDRAVIAKILRSSKYRVTTVESATRALELLCLGLVPNVNMIITDYWMPGMTGYELLKRVKESSQLKEIPVVIMSSENVPNRISRCLEEGAEDFLLKPVRPSDVSRLCSRIR.

In terms of domain architecture, Response regulatory spans 51-170 (HVLAVDDSSV…DVSRLCSRIR (120 aa)). Asp-103 bears the 4-aspartylphosphate mark.

Belongs to the ARR family. Type-A subfamily. In terms of processing, two-component system major event consists of a His-to-Asp phosphorelay between a sensor histidine kinase (HK) and a response regulator (RR). In plants, the His-to-Asp phosphorelay involves an additional intermediate named Histidine-containing phosphotransfer protein (HPt). This multistep phosphorelay consists of a His-Asp-His-Asp sequential transfer of a phosphate group between first a His and an Asp of the HK protein, followed by the transfer to a conserved His of the HPt protein and finally the transfer to an Asp in the receiver domain of the RR protein. In terms of tissue distribution, expressed in roots, leaf blades, leaf sheaths, shoot apex, flowers and panicles.

Functionally, functions as a response regulator involved in His-to-Asp phosphorelay signal transduction system. Phosphorylation of the Asp residue in the receiver domain activates the ability of the protein to promote the transcription of target genes. Type-A response regulators seem to act as negative regulators of the cytokinin signaling. The chain is Two-component response regulator ORR6 from Oryza sativa subsp. japonica (Rice).